Reading from the N-terminus, the 186-residue chain is uncharacterized protein (186 aa).

The next 3 helical transmembrane spans lie at 42–62, 80–100, and 131–151; these read ISIAISVFSVIGTIVIALSVL, LLFLLNGIATAFLTLYGIGLV, and ICGIFLIMGEALCSVTSFIVL.

The protein to U.parvum UU008, UU041 and UU042.

Its subcellular location is the cell membrane. This is an uncharacterized protein from Ureaplasma parvum serovar 3 (strain ATCC 700970).